The chain runs to 88 residues: Small ribosomal subunit protein uS19 (88 aa).

The protein belongs to the universal ribosomal protein uS19 family.

In terms of biological role, protein S19 forms a complex with S13 that binds strongly to the 16S ribosomal RNA. In Carsonella ruddii (strain PV), this protein is Small ribosomal subunit protein uS19.